A 720-amino-acid chain; its full sequence is Polyribonucleotide nucleotidyltransferase (720 aa).

Residues Asp-485 and Asp-491 each coordinate Mg(2+). One can recognise a KH domain in the interval 552-615 (PRIHTIKINP…EAIRRIQALT (64 aa)). Residues 621-689 (GRIYEGKVTR…RQGRIRLSIK (69 aa)) form the S1 motif domain. Residues 697–720 (PAAESVAESAPAQEAVVEQVPMTE) form a disordered region. The segment covering 698–720 (AAESVAESAPAQEAVVEQVPMTE) has biased composition (low complexity).

The protein belongs to the polyribonucleotide nucleotidyltransferase family. In terms of assembly, component of the RNA degradosome, which is a multiprotein complex involved in RNA processing and mRNA degradation. Requires Mg(2+) as cofactor.

It localises to the cytoplasm. The enzyme catalyses RNA(n+1) + phosphate = RNA(n) + a ribonucleoside 5'-diphosphate. Functionally, involved in mRNA degradation. Catalyzes the phosphorolysis of single-stranded polyribonucleotides processively in the 3'- to 5'-direction. The chain is Polyribonucleotide nucleotidyltransferase from Tolumonas auensis (strain DSM 9187 / NBRC 110442 / TA 4).